The chain runs to 87 residues: U3-theraphotoxin-Hhn1a 8 (87 aa).

The N-terminal stretch at 1–24 (MVNMKASMFLTFAGLVLLFVVCYA) is a signal peptide. A propeptide spanning residues 25-52 (SGSEEKEFPKEMLSSIFAVDNDFKQEER) is cleaved from the precursor. 3 disulfides stabilise this stretch: cysteine 54/cysteine 67, cysteine 61/cysteine 72, and cysteine 66/cysteine 79.

Belongs to the neurotoxin 10 (Hwtx-1) family. 51 (Hntx-8) subfamily. Hntx-8 sub-subfamily. In terms of tissue distribution, expressed by the venom gland.

It is found in the secreted. Its function is as follows. Ion channel inhibitor. The chain is U3-theraphotoxin-Hhn1a 8 from Cyriopagopus hainanus (Chinese bird spider).